A 642-amino-acid chain; its full sequence is Sec1 family domain-containing protein 1 (642 aa).

Alanine 2 is modified (N-acetylalanine). Residues serine 37, serine 303, and serine 528 each carry the phosphoserine modification.

The protein belongs to the STXBP/unc-18/SEC1 family. Interacts with STX17. Interacts with STX5A. Interacts with the COG complex via COG4.

The protein localises to the cytoplasm. The protein resides in the endoplasmic reticulum membrane. It localises to the golgi apparatus. It is found in the golgi stack membrane. Plays a role in SNARE-pin assembly and Golgi-to-ER retrograde transport via its interaction with COG4. Involved in vesicular transport between the endoplasmic reticulum and the Golgi. The chain is Sec1 family domain-containing protein 1 (SCFD1) from Homo sapiens (Human).